The primary structure comprises 395 residues: Calsequestrin-1 (395 aa).

The signal sequence occupies residues 1-28 (MNAADRMGARVALLLLLVLGSPQSGVHG). At Y37 the chain carries Phosphotyrosine. A Phosphoserine modification is found at S75. At T118 the chain carries Phosphothreonine. A Phosphoserine modification is found at S210. An N-linked (GlcNAc...) asparagine glycan is attached at N344. A disordered region spans residues 376–395 (EGEINTEDDDDEDDDDDDDD).

It belongs to the calsequestrin family. Monomer; increases in response to a depletion of intracellular calcium. Homodimer. Homotetramer and homopolymer. Can form linear homooligomers. Ca(2+) ions promote oligomerization. Interacts (via C-terminal end and preferentially with the monomeric form) with STIM1; this interaction increases in response to a depletion of intracellular calcium, decreases both STIM1 aggregation and clustering, interaction of STIM1 with ORAI1 and store-operated Ca(2+) entry (SOCE) activity. Interacts with ASPH and TRDN. N-glycosylated. Detected in skeletal muscle (at protein level). Detected in skeletal muscle.

The protein localises to the endoplasmic reticulum. The protein resides in the sarcoplasmic reticulum. It is found in the sarcoplasmic reticulum lumen. Its subcellular location is the mitochondrion matrix. It localises to the sarcoplasmic reticulum membrane. Calsequestrin is a high-capacity, moderate affinity, calcium-binding protein and thus acts as an internal calcium store in muscle. Calcium ions are bound by clusters of acidic residues at the protein surface, often at the interface between subunits. Can bind around 80 Ca(2+) ions. Regulates the release of lumenal Ca(2+) via the calcium release channel RYR1; this plays an important role in triggering muscle contraction. Negatively regulates store-operated Ca(2+) entry (SOCE) activity. The sequence is that of Calsequestrin-1 (CASQ1) from Oryctolagus cuniculus (Rabbit).